We begin with the raw amino-acid sequence, 261 residues long: Carbonic anhydrase 1 (261 aa).

Ala2 carries the post-translational modification N-acetylalanine. The Alpha-carbonic anhydrase domain occupies 4-261 (PDWGYDGENG…LNGRTVKASF (258 aa)). Residue His65 is the Proton donor/acceptor of the active site. Positions 95, 97, and 120 each coordinate Zn(2+). Residues Thr200 and 200-201 (TH) contribute to the substrate site.

The protein belongs to the alpha-carbonic anhydrase family. It depends on Zn(2+) as a cofactor.

It is found in the cytoplasm. It catalyses the reaction hydrogencarbonate + H(+) = CO2 + H2O. It carries out the reaction urea = cyanamide + H2O. Its activity is regulated as follows. Inhibited by acetazolamide. Its function is as follows. Catalyzes the reversible hydration of carbon dioxide. Can hydrate cyanamide to urea. This is Carbonic anhydrase 1 (CA1) from Bos taurus (Bovine).